The following is a 238-amino-acid chain: Cysteine-rich venom protein pseudechetoxin-like (238 aa).

Positions 1–19 (MIAFTVLLSLAAVLQQSSG) are cleaved as a signal peptide. A propeptide spanning residues 20–28 (TVDFASESS) is cleaved from the precursor. The SCP domain occupies 38-164 (VDKHNDLRRS…STKYLYVCQY (127 aa)). 8 disulfides stabilise this stretch: C75–C153, C92–C165, C148–C162, C184–C191, C187–C196, C200–C233, C209–C227, and C218–C231. A ShKT domain is found at 200–233 (CKHNNDFSNCKALAKKSKCQTEWIKSKCPATCFC).

Belongs to the CRISP family. As to expression, expressed by the venom gland.

The protein resides in the secreted. Its function is as follows. Blocks olfactory (CNGA2) and retinal (CNGA1) CNG channel currents. Does not affect neither depolarization- nor caffeine-induced contraction of smooth muscle. The chain is Cysteine-rich venom protein pseudechetoxin-like from Oxyuranus scutellatus scutellatus (Australian taipan).